Consider the following 513-residue polypeptide: Xylose import ATP-binding protein XylG (513 aa).

2 consecutive ABC transporter domains span residues 5–242 (LEMK…VGRE) and 259–505 (LRIE…LRSE). Residue 37–44 (GENGSGKS) participates in ATP binding.

The protein belongs to the ABC transporter superfamily. Xylose importer (TC 3.A.1.2.4) family. In terms of assembly, the complex is composed of two ATP-binding proteins (XylG), two transmembrane proteins (XylH) and a solute-binding protein (XylF).

The protein localises to the cell inner membrane. The catalysed reaction is D-xylose(out) + ATP + H2O = D-xylose(in) + ADP + phosphate + H(+). In terms of biological role, part of the ABC transporter complex XylFGH involved in xylose import. Responsible for energy coupling to the transport system. The sequence is that of Xylose import ATP-binding protein XylG from Shigella flexneri serotype 5b (strain 8401).